We begin with the raw amino-acid sequence, 190 residues long: Elongation factor P-like protein (190 aa).

This sequence belongs to the elongation factor P family.

The protein is Elongation factor P-like protein of Pectobacterium carotovorum subsp. carotovorum (strain PC1).